The primary structure comprises 319 residues: MKRSLILGIGSYLPKKVVTNDELTLTIETSDEWIVKRTGIKQRHIAEDNEMTSDMATSAAKLALDNAGIDKNEIDLIIVATTTPDRTFPSCATIVQSKLGCKNAFAFDIQAVCSGFVYALSIADNFIKSGQVRTVLVIGAEIMSRILDWQDRSTCVLFGDGAGAIVLSSSTEDDSGIISTNLHSDGTFHDLLYTSGGTAYNGVAGTICMNGTVVFEHAIEKLSASILEILSQNDLEICDIDWFVLHQANIRIIELVARRLKIPYEKMIVSIDQHANTSAASIPLALYYARSSGKLKKHDVAVLAAIGGGLTWGTCLVRI.

Residues Cys113 and His246 contribute to the active site. An ACP-binding region spans residues 247-251; the sequence is QANIR. Asn276 is a catalytic residue.

Belongs to the thiolase-like superfamily. FabH family. As to quaternary structure, homodimer.

The protein resides in the cytoplasm. The catalysed reaction is malonyl-[ACP] + acetyl-CoA + H(+) = 3-oxobutanoyl-[ACP] + CO2 + CoA. It functions in the pathway lipid metabolism; fatty acid biosynthesis. Catalyzes the condensation reaction of fatty acid synthesis by the addition to an acyl acceptor of two carbons from malonyl-ACP. Catalyzes the first condensation reaction which initiates fatty acid synthesis and may therefore play a role in governing the total rate of fatty acid production. Possesses both acetoacetyl-ACP synthase and acetyl transacylase activities. Its substrate specificity determines the biosynthesis of branched-chain and/or straight-chain of fatty acids. The chain is Beta-ketoacyl-[acyl-carrier-protein] synthase III from Ehrlichia canis (strain Jake).